A 340-amino-acid chain; its full sequence is CaiB/baiF CoA-transferase family protein ZK892.4 (340 aa).

Aspartate 154 acts as the Nucleophile in catalysis.

It belongs to the CoA-transferase III family.

This Caenorhabditis elegans protein is CaiB/baiF CoA-transferase family protein ZK892.4.